The following is a 444-amino-acid chain: Multidrug resistance protein MdtA (444 aa).

Positions 1–20 are cleaved as a signal peptide; the sequence is MKSQSKRTSRLFVFVGVVVA. Residues 37–52 are compositionally biased toward polar residues; that stretch reads NNTSGAQQSARGQDTS. 2 disordered regions span residues 37 to 60 and 399 to 444; these read NNTS…RNTP and PRSA…AEKS. Positions 409–419 are enriched in low complexity; it reads ASAEKAAAEAE. A compositionally biased stretch (polar residues) spans 435–444; sequence ARSTTAAEKS.

This sequence belongs to the membrane fusion protein (MFP) (TC 8.A.1) family. Part of a tripartite efflux system composed of MdtA, MdtB and MdtC.

The protein resides in the cell inner membrane. The sequence is that of Multidrug resistance protein MdtA from Yersinia pseudotuberculosis serotype I (strain IP32953).